The sequence spans 214 residues: A-type ATP synthase subunit D (214 aa).

Belongs to the V-ATPase D subunit family. In terms of assembly, has multiple subunits with at least A(3), B(3), C, D, E, F, H, I and proteolipid K(x).

It is found in the cell membrane. Functionally, component of the A-type ATP synthase that produces ATP from ADP in the presence of a proton gradient across the membrane. The chain is A-type ATP synthase subunit D from Thermococcus sibiricus (strain DSM 12597 / MM 739).